The chain runs to 298 residues: ATP phosphoribosyltransferase (298 aa).

This sequence belongs to the ATP phosphoribosyltransferase family. Long subfamily. Mg(2+) is required as a cofactor.

Its subcellular location is the cytoplasm. It carries out the reaction 1-(5-phospho-beta-D-ribosyl)-ATP + diphosphate = 5-phospho-alpha-D-ribose 1-diphosphate + ATP. The protein operates within amino-acid biosynthesis; L-histidine biosynthesis; L-histidine from 5-phospho-alpha-D-ribose 1-diphosphate: step 1/9. Feedback inhibited by histidine. Functionally, catalyzes the condensation of ATP and 5-phosphoribose 1-diphosphate to form N'-(5'-phosphoribosyl)-ATP (PR-ATP). Has a crucial role in the pathway because the rate of histidine biosynthesis seems to be controlled primarily by regulation of HisG enzymatic activity. In Aliivibrio fischeri (strain ATCC 700601 / ES114) (Vibrio fischeri), this protein is ATP phosphoribosyltransferase.